A 1530-amino-acid polypeptide reads, in one-letter code: Brefeldin A resistance protein (1530 aa).

Residues 1–26 (MNQNSDTTHGQALGSTLNHTTEVTRI) show a composition bias toward polar residues. Residues 1–100 (MNQNSDTTHG…SDDSSVDRLA (100 aa)) form a disordered region. Asn-28 carries N-linked (GlcNAc...) asparagine glycosylation. Positions 36 to 48 (SSSNVDESLDSSN) are enriched in low complexity. The segment covering 54-64 (KASHTNEEYRS) has biased composition (basic and acidic residues). Asn-67 carries an N-linked (GlcNAc...) asparagine glycan. The span at 72-93 (PSSSNEPSPESSSNSDSSSSDD) shows a compositional bias: low complexity. The 258-residue stretch at 153–410 (KTFPDIFLQP…FLDMGFDCHP (258 aa)) folds into the ABC transporter 1 domain. N-linked (GlcNAc...) asparagine glycans are attached at residues Asn-273, Asn-334, and Asn-450. Residues Ser-486 and Ser-489 each carry the phosphoserine modification. Thr-491 bears the Phosphothreonine mark. Helical transmembrane passes span 539-559 (AYIG…GSIF), 575-595 (VLFF…ANMF), 620-640 (LIVD…VLYF), 649-669 (GGFW…SAFF), 684-704 (ALGG…IPNI), and 791-811 (LAII…ASET). Residues 843–864 (PLDLETGQDTQGGDVVKESPDN) form a disordered region. The ABC transporter 2 domain maps to 882-1125 (FSWRNLNYDI…LLNYFESHGA (244 aa)). 918–925 (GESGAGKT) contacts ATP. Residues Asn-1159 and Asn-1175 are each glycosylated (N-linked (GlcNAc...) asparagine). The residue at position 1186 (Thr-1186) is a Phosphothreonine. A run of 6 helical transmembrane segments spans residues 1220–1240 (ILMS…FTFY), 1255–1275 (AVFM…PKFI), 1300–1320 (AIIV…LCWF), 1338–1358 (YAWL…QAVA), 1367–1387 (ASVV…VLQP), and 1392–1412 (VGFW…EGLL). Asn-1449 and Asn-1460 each carry an N-linked (GlcNAc...) asparagine glycan. A helical membrane pass occupies residues 1492–1512 (GIFVGYVFFNIFAVLLLFYVF).

Belongs to the ABC transporter superfamily. ABCG family. PDR (TC 3.A.1.205) subfamily.

It localises to the membrane. In terms of biological role, confers hyper-resistance to brefeldin A (BFA), an inhibitor of intracellular protein transport. Could serve as an efflux pump of various antibiotics. This Schizosaccharomyces pombe (strain 972 / ATCC 24843) (Fission yeast) protein is Brefeldin A resistance protein (bfr1).